The following is a 261-amino-acid chain: Zaragozic acid A biosynthesis cluster protein 8 (261 aa).

Residues 242-254 (GTRSHTPAATQRR) are compositionally biased toward polar residues. The segment at 242–261 (GTRSHTPAATQRRGQGRGCG) is disordered.

It participates in secondary metabolite biosynthesis. Functionally, part of the gene cluster that mediates the biosynthesis of squalestatin S1 (SQS1, also known as zaragozic acid A), a heavily oxidized fungal polyketide that offers potent cholesterol lowering activity by targeting squalene synthase (SS). SQS1 is composed of a 2,8-dioxobicyclic[3.2.1]octane-3,4,5-tricarboxyclic acid core that is connected to two lipophilic polyketide arms. These initial steps feature the priming of an unusual benzoic acid starter unit onto the highly reducing polyketide synthase clz14, followed by oxaloacetate extension and product release to generate a tricarboxylic acid containing product. The phenylalanine ammonia lyase (PAL) clz10 and the acyl-CoA ligase clz12 are involved in transforming phenylalanine into benzoyl-CoA. The citrate synthase-like protein clz17 is involved in connecting the C-alpha-carbons of the hexaketide chain and oxaloacetate to afford the tricarboxylic acid unit. The potential hydrolytic enzymes, clz11 and clz13, are in close proximity to pks2 and may participate in product release. On the other side, the tetraketide arm is synthesized by a the squalestatin tetraketide synthase clz2 and enzymatically esterified to the core in the last biosynthetic step, by the acetyltransferase clz6. The biosynthesis of the tetraketide must involve 3 rounds of chain extension. After the first and second rounds methyl-transfer occurs, and in all rounds of extension the ketoreductase and dehydratase are active. The enoyl reductase and C-MeT of clz2 are not active in the final round of extension. The acetyltransferase clz6 appears to have a broad substrate selectivity for its acyl CoA substrate, allowing the in vitro synthesis of novel squalestatins. The biosynthesis of SQS1 requires several oxidative steps likely performed by oxidoreductases clz3, clz15 and clz16. Finally, in support of the identification of the cluster as being responsible for SQS1 production, the cluster contains a gene encoding a putative squalene synthase (SS) clz20, suggesting a likely mechanism for self-resistance. The polypeptide is Zaragozic acid A biosynthesis cluster protein 8 (Cochliobolus lunatus (Filamentous fungus)).